Consider the following 101-residue polypeptide: Putative septation protein SpoVG (101 aa).

It belongs to the SpoVG family.

Its function is as follows. Could be involved in septation. In Staphylococcus saprophyticus subsp. saprophyticus (strain ATCC 15305 / DSM 20229 / NCIMB 8711 / NCTC 7292 / S-41), this protein is Putative septation protein SpoVG.